We begin with the raw amino-acid sequence, 151 residues long: UPF0178 protein YaiI (151 aa).

The protein belongs to the UPF0178 family.

The chain is UPF0178 protein YaiI from Salmonella agona (strain SL483).